Here is a 160-residue protein sequence, read N- to C-terminus: Transcription antitermination protein NusB (160 aa).

The protein belongs to the NusB family.

Involved in transcription antitermination. Required for transcription of ribosomal RNA (rRNA) genes. Binds specifically to the boxA antiterminator sequence of the ribosomal RNA (rrn) operons. This is Transcription antitermination protein NusB from Rhizobium meliloti (strain 1021) (Ensifer meliloti).